The following is a 169-amino-acid chain: Ferric-chelate reductase (NAD(P)H) (169 aa).

Y7 contacts NADP(+). FMN contacts are provided by residues 27–31 (QIANT), 45–52 (CLNKENDT), 82–84 (RKS), and K89. NADP(+) contacts are provided by residues H126 and 147–154 (YADYHLMK).

It belongs to the non-flavoprotein flavin reductase family. As to quaternary structure, homodimer. It depends on FMN as a cofactor. The cofactor is FAD.

It carries out the reaction 2 a Fe(II)-siderophore + NAD(+) + H(+) = 2 a Fe(III)-siderophore + NADH. It catalyses the reaction 2 a Fe(II)-siderophore + NADP(+) + H(+) = 2 a Fe(III)-siderophore + NADPH. Its function is as follows. Catalyzes the reduction of bound ferric iron (Fe(3+)) in a variety of iron chelators (siderophores) using NAD(P)H as the electron donor, resulting in the release of Fe(2+). Not active with uncomplexed Fe(3+). Also reduces FMN and FAD, but not riboflavin. This chain is Ferric-chelate reductase (NAD(P)H), found in Archaeoglobus fulgidus (strain ATCC 49558 / DSM 4304 / JCM 9628 / NBRC 100126 / VC-16).